A 287-amino-acid chain; its full sequence is MTPSNTLQKLRKYLEGRTGKAIIDYNMIEDGDTVLVCVSGGKDSYTLLAMLMALQQRAPVKFRLIAMNLDQKQPGFPADILPRYFESIGIEYRIVEADTYSVVKEKIPEGKTTCSLCSRLRRGIIYRTAKELGANKIALGHHRDDMVHTLFLNLLFGGKLKAMPPKLVTDDKSHVVIRPLAYCAEADIAKFARGMEFPIIPCNLCGSQDNLQRQKIREMMQEWDKRYPGRTESVFTAMQNVVPSHLADADLFDFRGLTLDTPVDEGDIAFDAPEMPISGMIPISQTA.

The short motif at 39-44 (SGGKDS) is the PP-loop motif element. [4Fe-4S] cluster is bound by residues Cys-114, Cys-117, and Cys-205.

Belongs to the TtcA family. In terms of assembly, homodimer. Mg(2+) is required as a cofactor. [4Fe-4S] cluster serves as cofactor.

Its subcellular location is the cytoplasm. It catalyses the reaction cytidine(32) in tRNA + S-sulfanyl-L-cysteinyl-[cysteine desulfurase] + AH2 + ATP = 2-thiocytidine(32) in tRNA + L-cysteinyl-[cysteine desulfurase] + A + AMP + diphosphate + H(+). Its pathway is tRNA modification. In terms of biological role, catalyzes the ATP-dependent 2-thiolation of cytidine in position 32 of tRNA, to form 2-thiocytidine (s(2)C32). The sulfur atoms are provided by the cysteine/cysteine desulfurase (IscS) system. The chain is tRNA-cytidine(32) 2-sulfurtransferase from Dechloromonas aromatica (strain RCB).